Consider the following 449-residue polypeptide: MTHITFDYSKVLGQFVGEHELDYLQPQVSAADAFLRQGTGPGSDFLGWMDLPENYDKEEFSRIQKAAEKIKSDSEVLVVIGIGGSYLGAKAAIDFLNNHFANLQTAEERKAPQILYAGNSISSTYLADLVEYVQDKEFSVNVISKSGTTTEPAIAFRVFKELLVKKYGQEEANKRIYATTDKVKGAVKVEADANNWETFVVPDNVGGRFSVLTAVGLLPIAASGADITALMEGANAARKDLSSDKISENIAYQYAAVRNVLYRKGYITEILANYEPSLQYFGEWWKQLAGESEGKDQKGIYPTSANFSTDLHSLGQFIQEGYRNLFETVVRVEKPRKNVTIPELTEDLDGLGYLQGKDVDFVNKKATDGVLLAHTDGGVPNMFVTLPTQDAYTLGYTIYFFELAIGLSGYLNSVNPFDQPGVEAYKRNMFALLGKPGFEELSAELNARL.

Glu-291 (proton donor) is an active-site residue. Residues His-312 and Lys-426 contribute to the active site.

It belongs to the GPI family.

The protein resides in the cytoplasm. It catalyses the reaction alpha-D-glucose 6-phosphate = beta-D-fructose 6-phosphate. The protein operates within carbohydrate biosynthesis; gluconeogenesis. It functions in the pathway carbohydrate degradation; glycolysis; D-glyceraldehyde 3-phosphate and glycerone phosphate from D-glucose: step 2/4. Catalyzes the reversible isomerization of glucose-6-phosphate to fructose-6-phosphate. This Streptococcus agalactiae serotype Ia (strain ATCC 27591 / A909 / CDC SS700) protein is Glucose-6-phosphate isomerase.